We begin with the raw amino-acid sequence, 386 residues long: Bifunctional enzyme IspD/IspF (386 aa).

The 2-C-methyl-D-erythritol 4-phosphate cytidylyltransferase stretch occupies residues 1 to 226 (MATPSPLPSF…EDFMADLLPV (226 aa)). The 2-C-methyl-D-erythritol 2,4-cyclodiphosphate synthase stretch occupies residues 227–386 (RVGTGFDVHK…ATVVRKDTPA (160 aa)). Residues aspartate 233 and histidine 235 each coordinate a divalent metal cation. 4-CDP-2-C-methyl-D-erythritol 2-phosphate is bound by residues 233–235 (DVH) and 259–260 (HS). Position 267 (histidine 267) interacts with a divalent metal cation. Residues 281 to 283 (DIG), 357 to 360 (TTTE), phenylalanine 364, and arginine 367 contribute to the 4-CDP-2-C-methyl-D-erythritol 2-phosphate site.

In the N-terminal section; belongs to the IspD/TarI cytidylyltransferase family. IspD subfamily. The protein in the C-terminal section; belongs to the IspF family. A divalent metal cation is required as a cofactor.

It catalyses the reaction 2-C-methyl-D-erythritol 4-phosphate + CTP + H(+) = 4-CDP-2-C-methyl-D-erythritol + diphosphate. It carries out the reaction 4-CDP-2-C-methyl-D-erythritol 2-phosphate = 2-C-methyl-D-erythritol 2,4-cyclic diphosphate + CMP. It participates in isoprenoid biosynthesis; isopentenyl diphosphate biosynthesis via DXP pathway; isopentenyl diphosphate from 1-deoxy-D-xylulose 5-phosphate: step 2/6. The protein operates within isoprenoid biosynthesis; isopentenyl diphosphate biosynthesis via DXP pathway; isopentenyl diphosphate from 1-deoxy-D-xylulose 5-phosphate: step 4/6. Functionally, bifunctional enzyme that catalyzes the formation of 4-diphosphocytidyl-2-C-methyl-D-erythritol from CTP and 2-C-methyl-D-erythritol 4-phosphate (MEP) (IspD), and catalyzes the conversion of 4-diphosphocytidyl-2-C-methyl-D-erythritol 2-phosphate (CDP-ME2P) to 2-C-methyl-D-erythritol 2,4-cyclodiphosphate (ME-CPP) with a corresponding release of cytidine 5-monophosphate (CMP) (IspF). The sequence is that of Bifunctional enzyme IspD/IspF from Erythrobacter litoralis (strain HTCC2594).